A 224-amino-acid chain; its full sequence is Small ribosomal subunit protein uS7 (224 aa).

This sequence belongs to the universal ribosomal protein uS7 family. Part of the 30S ribosomal subunit.

In terms of biological role, one of the primary rRNA binding proteins, it binds directly to 16S rRNA where it nucleates assembly of the head domain of the 30S subunit. Is located at the subunit interface close to the decoding center. In Caldivirga maquilingensis (strain ATCC 700844 / DSM 13496 / JCM 10307 / IC-167), this protein is Small ribosomal subunit protein uS7.